We begin with the raw amino-acid sequence, 94 residues long: Small ribosomal subunit protein uS19 (94 aa).

Belongs to the universal ribosomal protein uS19 family.

Functionally, protein S19 forms a complex with S13 that binds strongly to the 16S ribosomal RNA. This chain is Small ribosomal subunit protein uS19, found in Dictyoglomus turgidum (strain DSM 6724 / Z-1310).